Here is a 203-residue protein sequence, read N- to C-terminus: Putative 3-methyladenine DNA glycosylase (203 aa).

Belongs to the DNA glycosylase MPG family.

In Clostridium tetani (strain Massachusetts / E88), this protein is Putative 3-methyladenine DNA glycosylase.